A 424-amino-acid chain; its full sequence is MAKQIQAIRGMNDILPTQSPLWQKLETVLRETVSAYGYSEIRTPIVESTDLFKRSIGEVTDIVEKEMYTFDDRNGDSLTLRPEGTASTVRAGNEHGLLYNQEQRLWYMGPMFRHERPQKGRYRQFNQFGVEVYGIGSADVDAEVLMLSHRLWEKLGITEHVTLELNTLGDPAERAAYRDALIAYLEQFKEQLDEESQRRMYTNPLRVLDTKNPDVQALLTDAPELMEYLGEETRAHFSHLCELLDAVGIKYVINPRLVRGLDYYNRTVFEWVTSSLGAQGTVLAGGRYDGLVEQLGGKNTPAVGFAMGLERIVLMLETLELTKDIPATVDVYVTAMGDASKIEAIKIAQSLRSELPHLRVMSHCGGGNFKKQMKRADKSGAQVALVIGEDELANNQVAVKYLREKKEQELVARDALATYIAELI.

This sequence belongs to the class-II aminoacyl-tRNA synthetase family. In terms of assembly, homodimer.

It is found in the cytoplasm. It carries out the reaction tRNA(His) + L-histidine + ATP = L-histidyl-tRNA(His) + AMP + diphosphate + H(+). This chain is Histidine--tRNA ligase, found in Shewanella sediminis (strain HAW-EB3).